The chain runs to 120 residues: UPF0102 protein CBU_1742 (120 aa).

This sequence belongs to the UPF0102 family.

The protein is UPF0102 protein CBU_1742 of Coxiella burnetii (strain RSA 493 / Nine Mile phase I).